The following is a 205-amino-acid chain: VDYCKIKCSSGIHTVCQYGESTKPSKNCADKVIKSVGPTEEEKKLIVNEHNRFRQKVAQGLETRGNPGPQPAASDMNNLVWNDELAHIAQVWASQCQILVHDKCRNTAKYQVGQNIAYAGGSKLPDVVSLIKLWENEVKDFNYNKGITKQNFGKVGHYTQMIWAKTKEIGCGSLKYMKNNMQHHYLICNYGPAGNYLGQLPYTKK.

4 disulfides stabilise this stretch: Cys-4–Cys-16, Cys-8–Cys-104, Cys-28–Cys-96, and Cys-171–Cys-188. The region spanning 47-190 (VNEHNRFRQK…MQHHYLICNY (144 aa)) is the SCP domain.

The protein belongs to the CRISP family. Venom allergen 5-like subfamily. Expressed by the venom gland.

It is found in the secreted. This Polistes fuscatus (Paper wasp) protein is Venom allergen 5.